The following is a 295-amino-acid chain: Perivine-Nbeta-methyltransferase (295 aa).

The interval 76-85 is SAM motif I; the sequence is ILDVGCGKGG. Positions 138 to 144 match the Vacuolar targeting signal motif; it reads DGSFELI. The tract at residues 139 to 147 is SAM motif II; that stretch reads GSFELIFVI. Residues 166–175 form an SAM motif III region; sequence VAAPGAQIVI.

Belongs to the class I-like SAM-binding methyltransferase superfamily. gTMT family. In terms of assembly, homodimer. In terms of tissue distribution, mainly expressed in young leaves, and, to a lower extent, in mature leaves, flowers, stems and roots (at protein level). Transcripts levels are highest in flowers, moderate in leaves and low in roots and stems.

The protein resides in the vacuole membrane. It carries out the reaction perivine + S-adenosyl-L-methionine = vobasine + S-adenosyl-L-homocysteine + 2 H(+). The protein operates within alkaloid biosynthesis; vindoline biosynthesis. Functionally, S-adenosyl-L-methionine-dependent N-methyltransferase involved in the biosynthesis of biologically active monoterpenoid indole alkaloids (MIAs) natural products including vindoline. Catalyzes the conversion of perivine to Nbeta-methylperivine (vobasine) by methylating its N4 nitrogen. Inactive with picrinine as substrate. This chain is Perivine-Nbeta-methyltransferase, found in Catharanthus roseus (Madagascar periwinkle).